The chain runs to 464 residues: Methionine aminopeptidase 2-2 (464 aa).

The disordered stretch occupies residues 1-106; it reads MGAKTYEGGD…PRVPLSQLFP (106 aa). Acidic residues predominate over residues 37–53; sequence EDGDGEFGSDDDDDGGD. The segment covering 70 to 86 has biased composition (basic residues); the sequence is PKKKKRSKKKKNNKKKS. His216 is a binding site for substrate. The a divalent metal cation site is built by Asp237, Asp248, and His317. Position 325 (His325) interacts with substrate. 2 residues coordinate a divalent metal cation: Glu350 and Glu445.

The protein belongs to the peptidase M24A family. Methionine aminopeptidase eukaryotic type 2 subfamily. It depends on Co(2+) as a cofactor. Zn(2+) serves as cofactor. Mn(2+) is required as a cofactor. The cofactor is Fe(2+).

The protein resides in the cytoplasm. The catalysed reaction is Release of N-terminal amino acids, preferentially methionine, from peptides and arylamides.. Functionally, cotranslationally removes the N-terminal methionine from nascent proteins. The N-terminal methionine is often cleaved when the second residue in the primary sequence is small and uncharged (Met-Ala-, Cys, Gly, Pro, Ser, Thr, or Val). This is Methionine aminopeptidase 2-2 from Talaromyces stipitatus (strain ATCC 10500 / CBS 375.48 / QM 6759 / NRRL 1006) (Penicillium stipitatum).